The primary structure comprises 395 residues: tRNA-specific 2-thiouridylase MnmA (395 aa).

ATP contacts are provided by residues 7-14 and M33; that span reads GLSGGVDS. The tract at residues 95-97 is interaction with target base in tRNA; that stretch reads NPD. Residue C100 is the Nucleophile of the active site. A disulfide bond links C100 and C200. G124 provides a ligand contact to ATP. The interval 150-152 is interaction with tRNA; that stretch reads KDQ. The Cysteine persulfide intermediate role is filled by C200. Positions 346 to 347 are interaction with tRNA; sequence RY.

Belongs to the MnmA/TRMU family.

Its subcellular location is the cytoplasm. It catalyses the reaction S-sulfanyl-L-cysteinyl-[protein] + uridine(34) in tRNA + AH2 + ATP = 2-thiouridine(34) in tRNA + L-cysteinyl-[protein] + A + AMP + diphosphate + H(+). Functionally, catalyzes the 2-thiolation of uridine at the wobble position (U34) of tRNA, leading to the formation of s(2)U34. The chain is tRNA-specific 2-thiouridylase MnmA from Flavobacterium johnsoniae (strain ATCC 17061 / DSM 2064 / JCM 8514 / BCRC 14874 / CCUG 350202 / NBRC 14942 / NCIMB 11054 / UW101) (Cytophaga johnsonae).